Reading from the N-terminus, the 580-residue chain is Negative elongation factor B (580 aa).

Lys519 is modified (N6-acetyllysine). The interval Asp552–Leu580 is disordered. At Ser557 the chain carries Phosphoserine.

The protein belongs to the NELF-B family. The NELF complex is composed of NELFA, NELFB, NELFCD and NELFE; the N-terminus of NELFB binds to the NELFA:NELFCD subcomplex. Binds RNA which may help to stabilize the NELF complex on nucleic acid Interacts with the first BRCT repeat of BRCA1. Interacts with KIAA1191. Isoform 1 and isoform 2 interact with NELFA, NELFCD and NELFE. Isoform 1 is expressed in the kidney, liver, adipose and lung. Isoform 2 is widely expressed.

It localises to the nucleus. Functionally, essential component of the NELF complex, a complex that negatively regulates the elongation of transcription by RNA polymerase II (Pol II). The NELF complex, which acts via an association with the DSIF complex and causes transcriptional pausing, is counteracted by the P-TEFb kinase complex. May be able to induce chromatin unfolding. Essential for early embryogenesis; plays an important role in maintaining the undifferentiated state of embryonic stem cells (ESCs) by preventing unscheduled expression of developmental genes. Plays a key role in establishing the responsiveness of stem cells to developmental cues; facilitates plasticity and cell fate commitment in ESCs by establishing the appropriate expression level of signaling molecules. Supports the transcription of genes involved in energy metabolism in cardiomyocytes; facilitates the association of transcription initiation factors with the promoters of the metabolism-related genes. The polypeptide is Negative elongation factor B (Nelfb) (Mus musculus (Mouse)).